The primary structure comprises 225 residues: Chlorosome protein J (225 aa).

Positions 1–95 (MIIYINDKPC…TIRVLTRAEK (95 aa)) constitute a 2Fe-2S ferredoxin-type domain. Cys-33, Cys-39, Cys-42, and Cys-77 together coordinate [2Fe-2S] cluster.

[2Fe-2S] cluster serves as cofactor.

The protein resides in the chlorosome. Functionally, could play a direct role in the oxidation or reduction of the quenching species formed in the chlorosome. The polypeptide is Chlorosome protein J (csmJ) (Chlorobaculum tepidum (strain ATCC 49652 / DSM 12025 / NBRC 103806 / TLS) (Chlorobium tepidum)).